Here is a 137-residue protein sequence, read N- to C-terminus: Envelope glycoprotein L (137 aa).

The signal sequence occupies residues 1 to 25 (MRTVGVFLATCLVTIFVLPTWGNWA). The interval 23–128 (NWAYPCCHVT…SVEDLFGANL (106 aa)) is interaction with gH. Disulfide bonds link cysteine 28-cysteine 56 and cysteine 29-cysteine 79.

It belongs to the herpesviridae glycoprotein L family. As to quaternary structure, interacts with glycoprotein H (gH); this interaction is necessary for the correct processing and cell surface expression of gH. The heterodimer gH/gL seems to interact with gB trimers during fusion. The heterodimer gH/gL interacts with host EPHA2 to facilitate virus internalization and fusion.

The protein localises to the virion membrane. The protein resides in the host cell membrane. It localises to the host Golgi apparatus. Its subcellular location is the host trans-Golgi network. The heterodimer glycoprotein H-glycoprotein L is required for the fusion of viral and plasma membranes leading to virus entry into the host cell. Acts as a functional inhibitor of gH and maintains gH in an inhibited form. Upon binding to host integrins, gL dissociates from gH leading to activation of the viral fusion glycoproteins gB and gH. The heterodimer gH/gL targets also host EPHA2 to promote viral entry. This Epstein-Barr virus (strain AG876) (HHV-4) protein is Envelope glycoprotein L.